An 895-amino-acid polypeptide reads, in one-letter code: uncharacterized protein (895 aa).

2-19 (NISVIGTGYVGLIQAVGL) lines the NAD(+) pocket. Cys-261 is an active-site residue. Residues 468-614 (LIGYYLSEGW…LLILLQLLGI (147 aa)) enclose the DOD-type homing endonuclease domain.

This sequence belongs to the UDP-glucose/GDP-mannose dehydrogenase family. Post-translationally, this protein undergoes a protein self splicing that involves a post-translational excision of the intervening region (intein) followed by peptide ligation.

This is an uncharacterized protein from Methanocaldococcus jannaschii (strain ATCC 43067 / DSM 2661 / JAL-1 / JCM 10045 / NBRC 100440) (Methanococcus jannaschii).